Consider the following 374-residue polypeptide: Glyceraldehyde-3-phosphate dehydrogenase A, chloroplastic (374 aa).

The transit peptide at 1–34 (MAAMMQKSAFTGSAVSSKSGVRAKAARAVVDVRA) directs the protein to the chloroplast. NADP(+)-binding positions include 47-48 (RI), D71, and R116. C55 and C325 are oxidised to a cystine. D-glyceraldehyde 3-phosphate is bound by residues 189–191 (SCT), T220, R235, 248–249 (TG), and R271. C190 serves as the catalytic Nucleophile. Residue N353 participates in NADP(+) binding.

This sequence belongs to the glyceraldehyde-3-phosphate dehydrogenase family. In terms of assembly, homotetramer. Component of a complex that contains two dimers of PRK, two tetramers of GAPDH and CP12. CP12 associates with GAPDH, causing its conformation to change. This GAPDH/CP12 complex binds PRK to form a half-complex (one unit). This unit probably dimerizes due partially to interactions between the enzymes of each unit.

It localises to the plastid. The protein resides in the chloroplast. The catalysed reaction is D-glyceraldehyde 3-phosphate + phosphate + NADP(+) = (2R)-3-phospho-glyceroyl phosphate + NADPH + H(+). It participates in carbohydrate biosynthesis; Calvin cycle. The polypeptide is Glyceraldehyde-3-phosphate dehydrogenase A, chloroplastic (GAPA) (Chlamydomonas reinhardtii (Chlamydomonas smithii)).